The following is a 256-amino-acid chain: uncharacterized protein (256 aa).

A disordered region spans residues 1-23 (MIPPCENAPHIIYHESQRGTRDR). Positions 12–23 (IYHESQRGTRDR) are enriched in basic and acidic residues.

This is an uncharacterized protein from Homo sapiens (Human).